A 460-amino-acid chain; its full sequence is Nucleosome assembly protein 1-like 2 (460 aa).

2 stretches are compositionally biased toward basic and acidic residues: residues 1 to 11 (MAESENRKELS) and 27 to 36 (LGEHLERGED). Disordered stretches follow at residues 1-88 (MAES…ADRP) and 214-238 (EEEE…EDPK). Residues 214-236 (EEEEEEEEDDIEATGEENKEEED) are compositionally biased toward acidic residues. A Nuclear localization signal motif is present at residues 346–352 (IKKKQKH).

The protein belongs to the nucleosome assembly protein (NAP) family.

The protein localises to the nucleus. In terms of biological role, acidic protein which may be involved in interactions with other proteins or DNA. The sequence is that of Nucleosome assembly protein 1-like 2 (NAP1L2) from Homo sapiens (Human).